The following is a 558-amino-acid chain: Atlastin-1 (558 aa).

The segment at Met-1–Val-29 is disordered. The tract at residues Met-1 to Pro-34 is N-terminal hypervariable region (HVR). The Cytoplasmic segment spans residues Met-1–Ala-449. Residues Ser-10, Ser-22, and Ser-23 each carry the phosphoserine modification. A GB1/RHD3-type G domain is found at Asp-64–Ser-309. The GDP site is built by Arg-77, Lys-78, Gly-79, Lys-80, Ser-81, Phe-82, Gln-148, Arg-217, Asp-218, Val-276, and Asn-279. GTP contacts are provided by Arg-77, Lys-78, Gly-79, Lys-80, Ser-81, and Phe-82. Ser-81 provides a ligand contact to Mg(2+). GTP is bound by residues Arg-217, Asp-218, and Val-276. The segment at Met-347–Ser-438 is 3HB (three-helix bundle) domain. N6-acetyllysine is present on Lys-395. The stretch at Glu-412–Lys-439 forms a coiled coil. The tract at residues Lys-439–Thr-447 is linker. A helical membrane pass occupies residues Thr-450 to Leu-470. Position 471 (Asp-471) is a topological domain, lumenal. The chain crosses the membrane as a helical span at residues Ile-472–Ala-492. At Tyr-493–Ile-558 the chain is on the cytoplasmic side. Residues Asn-521–Ile-558 are autoinhibitory domain.

The protein belongs to the TRAFAC class dynamin-like GTPase superfamily. GB1/RHD3 GTPase family. GB1 subfamily. Monomeric and homodimeric. The homodimer, transiently formed by two molecules on opposing membranes, is the active form mediating ER membrane fusion. Interacts with REEP1, REEP5, RTN3 and RTN4 (via the transmembrane region); these proteins are involved in endoplasmic reticulum tubular network organization. Interacts with ZFYVE27; both proteins are involved in endoplasmic reticulum tubular network organization. Interacts with ARL6IP1; both proteins are involved in endoplasmic reticulum tubular network organization. Interacts with SPAST; the interaction is direct, could recruit SPAST to Golgi membranes. Interacts (via N-terminal region) with MAP4K4 (via CNH regulatory domain). May interact with TMED2. Interacts with CPT1C. Phosphorylated. Phosphorylation, by different kinases, of the N-terminal hypervariable region (HVR) regulates the ATL1-mediated membrane tethering step. In terms of tissue distribution, detected in brain where it is abundant in lamina V of the cerebral cortex. Also expressed within the hippocampus, mainly in pyramidal neurons in CA1 and CA3. Weakly expressed in the striatum and more robustly in amygdala and several thalamic nuclei. Also detected in several mesopontine nuclei (at protein level).

The protein resides in the endoplasmic reticulum membrane. It is found in the golgi apparatus membrane. The protein localises to the cell projection. It localises to the axon. The catalysed reaction is GTP + H2O = GDP + phosphate + H(+). Atlastin-1 (ATL1) is a membrane-anchored GTPase that mediates the GTP-dependent fusion of endoplasmic reticulum (ER) membranes, maintaining the continuous ER network. It facilitates the formation of three-way junctions where ER tubules intersect. Two atlastin-1 on neighboring ER tubules bind GTP and form loose homodimers through the GB1/RHD3-type G domains and 3HB regions. Upon GTP hydrolysis, the 3HB regions tighten, pulling the membranes together to drive their fusion. After fusion, the homodimer disassembles upon release of inorganic phosphate (Pi). Subsequently, GDP dissociates, resetting the monomers to a conformation ready for a new fusion cycle. May also regulate more or less directly Golgi biogenesis. Indirectly regulates axonal development. The polypeptide is Atlastin-1 (Rattus norvegicus (Rat)).